The sequence spans 321 residues: Cytochrome f (321 aa).

Residues 1-37 (MKIYRQIKQSFSITKIVFSFFISLLLNLVAQPTICQA) form the signal peptide. The heme site is built by Phe38, Cys58, Cys61, and His62. Residues 287–306 (VQGLIAFFISVVLAQIFLVL) form a helical membrane-spanning segment.

This sequence belongs to the cytochrome f family. In terms of assembly, the 4 large subunits of the cytochrome b6-f complex are cytochrome b6, subunit IV (17 kDa polypeptide, petD), cytochrome f and the Rieske protein, while the 4 small subunits are PetG, PetL, PetM and PetN. The complex functions as a dimer. Requires heme as cofactor.

It localises to the plastid. The protein resides in the cyanelle thylakoid membrane. Component of the cytochrome b6-f complex, which mediates electron transfer between photosystem II (PSII) and photosystem I (PSI), cyclic electron flow around PSI, and state transitions. The polypeptide is Cytochrome f (petA) (Cyanophora paradoxa).